The following is a 750-amino-acid chain: Photosystem I P700 chlorophyll a apoprotein A1 (750 aa).

8 consecutive transmembrane segments (helical) span residues 70-93 (VFSA…FHGA), 156-179 (LYCT…FHYH), 195-219 (LNHH…HVSL), 291-309 (IAHH…GHMY), 346-369 (WHAQ…HHMY), 385-411 (LSLF…IFMV), 433-455 (AIIS…LYIH), and 531-549 (FLVH…LILL). [4Fe-4S] cluster-binding residues include Cys573 and Cys582. The next 2 membrane-spanning stretches (helical) occupy residues 589–610 (HVFL…HFSW) and 664–686 (LSAY…MFLF). A chlorophyll a'-binding site is contributed by His675. Chlorophyll a contacts are provided by Met683 and Tyr691. Trp692 is a phylloquinone binding site. The chain crosses the membrane as a helical span at residues 724–744 (AVGVTHYLLGGIATTWAFFLA).

The protein belongs to the PsaA/PsaB family. In terms of assembly, the PsaA/B heterodimer binds the P700 chlorophyll special pair and subsequent electron acceptors. PSI consists of a core antenna complex that captures photons, and an electron transfer chain that converts photonic excitation into a charge separation. The eukaryotic PSI reaction center is composed of at least 11 subunits. P700 is a chlorophyll a/chlorophyll a' dimer, A0 is one or more chlorophyll a, A1 is one or both phylloquinones and FX is a shared 4Fe-4S iron-sulfur center. serves as cofactor.

Its subcellular location is the plastid. The protein resides in the chloroplast thylakoid membrane. The catalysed reaction is reduced [plastocyanin] + hnu + oxidized [2Fe-2S]-[ferredoxin] = oxidized [plastocyanin] + reduced [2Fe-2S]-[ferredoxin]. Functionally, psaA and PsaB bind P700, the primary electron donor of photosystem I (PSI), as well as the electron acceptors A0, A1 and FX. PSI is a plastocyanin-ferredoxin oxidoreductase, converting photonic excitation into a charge separation, which transfers an electron from the donor P700 chlorophyll pair to the spectroscopically characterized acceptors A0, A1, FX, FA and FB in turn. Oxidized P700 is reduced on the lumenal side of the thylakoid membrane by plastocyanin. This is Photosystem I P700 chlorophyll a apoprotein A1 from Drimys granadensis.